The primary structure comprises 377 residues: Bifunctional enzyme IspD/IspF (377 aa).

The tract at residues 1–221 (MTTAAIIVAA…ERILRQDMDV (221 aa)) is 2-C-methyl-D-erythritol 4-phosphate cytidylyltransferase. A 2-C-methyl-D-erythritol 2,4-cyclodiphosphate synthase region spans residues 222-377 (RLGNGYDVHR…ALATACLVKP (156 aa)). Asp-228 and His-230 together coordinate a divalent metal cation. Residues 228 to 230 (DVH) and 254 to 255 (HS) each bind 4-CDP-2-C-methyl-D-erythritol 2-phosphate. His-262 is a binding site for a divalent metal cation. 4-CDP-2-C-methyl-D-erythritol 2-phosphate-binding positions include 276 to 278 (DIG), 352 to 355 (TTSE), Phe-359, and Arg-362.

This sequence in the N-terminal section; belongs to the IspD/TarI cytidylyltransferase family. IspD subfamily. In the C-terminal section; belongs to the IspF family. A divalent metal cation serves as cofactor.

The catalysed reaction is 2-C-methyl-D-erythritol 4-phosphate + CTP + H(+) = 4-CDP-2-C-methyl-D-erythritol + diphosphate. It carries out the reaction 4-CDP-2-C-methyl-D-erythritol 2-phosphate = 2-C-methyl-D-erythritol 2,4-cyclic diphosphate + CMP. It participates in isoprenoid biosynthesis; isopentenyl diphosphate biosynthesis via DXP pathway; isopentenyl diphosphate from 1-deoxy-D-xylulose 5-phosphate: step 2/6. Its pathway is isoprenoid biosynthesis; isopentenyl diphosphate biosynthesis via DXP pathway; isopentenyl diphosphate from 1-deoxy-D-xylulose 5-phosphate: step 4/6. Bifunctional enzyme that catalyzes the formation of 4-diphosphocytidyl-2-C-methyl-D-erythritol from CTP and 2-C-methyl-D-erythritol 4-phosphate (MEP) (IspD), and catalyzes the conversion of 4-diphosphocytidyl-2-C-methyl-D-erythritol 2-phosphate (CDP-ME2P) to 2-C-methyl-D-erythritol 2,4-cyclodiphosphate (ME-CPP) with a corresponding release of cytidine 5-monophosphate (CMP) (IspF). The polypeptide is Bifunctional enzyme IspD/IspF (Ruegeria pomeroyi (strain ATCC 700808 / DSM 15171 / DSS-3) (Silicibacter pomeroyi)).